The primary structure comprises 396 residues: Elongation factor Tu (396 aa).

Residues 10-206 (KPHVNVGTIG…ALDTYIPTPE (197 aa)) form the tr-type G domain. The G1 stretch occupies residues 19-26 (GHVDHGKT). GTP is bound at residue 19 to 26 (GHVDHGKT). Thr26 provides a ligand contact to Mg(2+). The tract at residues 60-64 (GITIN) is G2. The tract at residues 81 to 84 (DCPG) is G3. Residues 81-85 (DCPGH) and 136-139 (NKCD) each bind GTP. The tract at residues 136–139 (NKCD) is G4. Residues 174-176 (SAK) are G5.

The protein belongs to the TRAFAC class translation factor GTPase superfamily. Classic translation factor GTPase family. EF-Tu/EF-1A subfamily. In terms of assembly, monomer.

It localises to the cytoplasm. It carries out the reaction GTP + H2O = GDP + phosphate + H(+). Functionally, GTP hydrolase that promotes the GTP-dependent binding of aminoacyl-tRNA to the A-site of ribosomes during protein biosynthesis. The protein is Elongation factor Tu of Thiomonas delicata (Thiomonas cuprina).